The following is a 148-amino-acid chain: Large ribosomal subunit protein uL13 (148 aa).

Basic and acidic residues-rich tracts occupy residues 71–81 (GKKEKQKEYHE) and 89–99 (DHSHSPEEMRA). Disordered regions lie at residues 71–99 (GKKE…EMRA) and 125–148 (KKLK…LDNA).

This sequence belongs to the universal ribosomal protein uL13 family. As to quaternary structure, part of the 50S ribosomal subunit.

In terms of biological role, this protein is one of the early assembly proteins of the 50S ribosomal subunit, although it is not seen to bind rRNA by itself. It is important during the early stages of 50S assembly. In Salinibacter ruber (strain DSM 13855 / M31), this protein is Large ribosomal subunit protein uL13.